Consider the following 810-residue polypeptide: Probable dehydratase YbiW (810 aa).

The region spanning 11-682 is the PFL domain; sequence DRIKAHKNAL…QTMATPDGRK (672 aa). Positions 677–699 are disordered; that stretch reads TPDGRKAHTPLAEGASPASGTDH. The Glycine radical domain occupies 689-810; the sequence is EGASPASGTD…DIIARTEHML (122 aa). A Glycine radical modification is found at glycine 786.

It belongs to the glycyl radical enzyme (GRE) family.

Functionally, probably shows dehydratase activity. The sequence is that of Probable dehydratase YbiW (ybiW) from Escherichia coli (strain K12).